A 223-amino-acid chain; its full sequence is Ribosomal RNA small subunit methyltransferase G (223 aa).

S-adenosyl-L-methionine contacts are provided by residues Gly82, Leu87, 133–134 (AE), and Arg151.

This sequence belongs to the methyltransferase superfamily. RNA methyltransferase RsmG family.

The protein localises to the cytoplasm. Its function is as follows. Specifically methylates the N7 position of guanine in position 518 of 16S rRNA. The protein is Ribosomal RNA small subunit methyltransferase G of Corynebacterium glutamicum (strain ATCC 13032 / DSM 20300 / JCM 1318 / BCRC 11384 / CCUG 27702 / LMG 3730 / NBRC 12168 / NCIMB 10025 / NRRL B-2784 / 534).